A 259-amino-acid polypeptide reads, in one-letter code: UPF0246 protein NGK_0633 (259 aa).

Belongs to the UPF0246 family.

The polypeptide is UPF0246 protein NGK_0633 (Neisseria gonorrhoeae (strain NCCP11945)).